Consider the following 1452-residue polypeptide: ABC multidrug transporter A-1 (1452 aa).

The interval 1–20 is disordered; it reads MNESHEAGKNSSTNVEEREE. N-linked (GlcNAc...) asparagine glycans are attached at residues asparagine 2, asparagine 10, asparagine 228, asparagine 287, and asparagine 311. The 254-residue stretch at 110 to 363 folds into the ABC transporter 1 domain; that stretch reads LKTLSLARIA…FLQMGFVCPD (254 aa). The next 6 helical transmembrane spans lie at 474–494, 508–528, 554–574, 583–603, 616–636, and 725–745; these read VTIS…SIFY, ALLF…MLTL, MIMD…VLYF, GAFF…SMFF, VLPF…FAIP, and IGVI…ATDF. The ABC transporter 2 domain maps to 802 to 1044; it reads FQWKDVCFDI…ILIDYFVRNG (243 aa). An ATP-binding site is contributed by 838–845; the sequence is GVSGAGKT. A run of 6 helical transmembrane segments spans residues 1153–1173, 1183–1203, 1223–1243, 1271–1291, 1297–1317, and 1324–1344; these read ALCV…PNTI, IFML…HFVA, FLIA…VLMF, LMIW…IAAF, AGNL…VLAT, and FWIF…MLSV. Residues asparagine 1350, asparagine 1365, and asparagine 1391 are each glycosylated (N-linked (GlcNAc...) asparagine). A helical transmembrane segment spans residues 1418–1438; it reads FGLMWVFIVFNIFAACSLYWW.

The protein belongs to the ABC transporter superfamily. ABCG family. PDR (TC 3.A.1.205) subfamily.

The protein localises to the membrane. Its function is as follows. ABC transporter that seems not to be involved in the efflux of toxic substances, at least not the classical compounds such as itraconazole, amphotericin B, voriconazole, posaconazole, ravuconazole, or echinocandins. The polypeptide is ABC multidrug transporter A-1 (Aspergillus fumigatus (strain ATCC MYA-4609 / CBS 101355 / FGSC A1100 / Af293) (Neosartorya fumigata)).